The chain runs to 223 residues: Urease accessory protein UreF (223 aa).

The protein belongs to the UreF family. As to quaternary structure, ureD, UreF and UreG form a complex that acts as a GTP-hydrolysis-dependent molecular chaperone, activating the urease apoprotein by helping to assemble the nickel containing metallocenter of UreC. The UreE protein probably delivers the nickel.

Its subcellular location is the cytoplasm. Required for maturation of urease via the functional incorporation of the urease nickel metallocenter. This Rhizobium leguminosarum bv. trifolii (strain WSM2304) protein is Urease accessory protein UreF.